An 802-amino-acid polypeptide reads, in one-letter code: Copper-exporting P-type ATPase (802 aa).

HMA domains follow at residues 5 to 70 (KKTT…YGVA) and 72 to 138 (ETVE…YDAS). Residues C16, C19, C83, and C86 each contribute to the Cu(+) site. 6 helical membrane-spanning segments follow: residues 161–181 (LIIS…HLFN), 192–212 (WFQF…FYVG), 224–244 (MDVL…YEMV), 256–276 (LYFE…YLEA), 411–431 (YFVP…ITLV), and 438–458 (PALV…LGLA). D495 acts as the 4-aspartylphosphate intermediate in catalysis. Residues D690 and D694 each coordinate Mg(2+). A run of 2 helical transmembrane segments spans residues 748-767 (LFWA…LGLL) and 771-790 (VAGA…ALRL).

It belongs to the cation transport ATPase (P-type) (TC 3.A.3) family. Type IB subfamily.

It localises to the cell membrane. It carries out the reaction Cu(+)(in) + ATP + H2O = Cu(+)(out) + ADP + phosphate + H(+). In terms of biological role, involved in copper export. This Staphylococcus aureus (strain MW2) protein is Copper-exporting P-type ATPase (copA).